The primary structure comprises 129 residues: M-zodatoxin-Lt8j (129 aa).

A signal peptide spans 1–20 (MKYFVVALALVAAFACIAES). Residues 21–60 (KPAESEHELAEVEEENELADLEDAVWLEHLADLSDLEEAR) constitute a propeptide that is removed on maturation.

The protein belongs to the cationic peptide 06 (cytoinsectotoxin) family. Expressed by the venom gland.

It localises to the secreted. Insecticidal, cytolytic and antimicrobial peptide. Forms voltage-dependent, ion-permeable channels in membranes. At high concentration causes cell membrane lysis. The protein is M-zodatoxin-Lt8j (cit 1-9) of Lachesana tarabaevi (Spider).